Here is a 671-residue protein sequence, read N- to C-terminus: DNA ligase (671 aa).

Residues 32 to 36 (DAEYD), 81 to 82 (SL), and E113 contribute to the NAD(+) site. K115 functions as the N6-AMP-lysine intermediate in the catalytic mechanism. NAD(+) is bound by residues R136, E173, K290, and K314. Zn(2+) contacts are provided by C408, C411, C426, and C432. Residues 593–671 (EIDSPFAGKT…EAEMLRLLGV (79 aa)) form the BRCT domain.

This sequence belongs to the NAD-dependent DNA ligase family. LigA subfamily. Mg(2+) is required as a cofactor. Requires Mn(2+) as cofactor.

It carries out the reaction NAD(+) + (deoxyribonucleotide)n-3'-hydroxyl + 5'-phospho-(deoxyribonucleotide)m = (deoxyribonucleotide)n+m + AMP + beta-nicotinamide D-nucleotide.. In terms of biological role, DNA ligase that catalyzes the formation of phosphodiester linkages between 5'-phosphoryl and 3'-hydroxyl groups in double-stranded DNA using NAD as a coenzyme and as the energy source for the reaction. It is essential for DNA replication and repair of damaged DNA. This chain is DNA ligase, found in Salmonella arizonae (strain ATCC BAA-731 / CDC346-86 / RSK2980).